The primary structure comprises 258 residues: Aquaglyceroporin (258 aa).

Over 1–11 (MHMLFYKSYVR) the chain is Cytoplasmic. Residues 12 to 32 (EFIGEFLGTFVLMFLGEGATA) form a helical membrane-spanning segment. Residues 33–45 (NFHTTGLSGDWYK) are Extracellular-facing. The helical transmembrane segment at 46–66 (LCLGWGLAVFFGILVSAKLSG) threads the bilayer. Positions 66, 67, and 70 each coordinate glycerol. Residues 67 to 87 (AHLNLAVSIGLSSINKFDLKK) are Cytoplasmic-facing. Residues 88–108 (IPVYFFAQLLGAFVGTSTVYG) form a helical membrane-spanning segment. The Extracellular segment spans residues 109 to 135 (LYHGFISNSKIPQFAWETSRNPSISLT). Position 127 (Ser127) interacts with glycerol. A helical membrane pass occupies residues 136-156 (GAFFNELILTGILLLVILVVV). At 157–171 (DENICGKFHILKLSS) the chain is on the cytoplasmic side. The chain crosses the membrane as a helical span at residues 172-192 (VVGLIILCIGITFGGNTGFAL). Positions 189, 190, 193, and 196 each coordinate glycerol. The Extracellular portion of the chain corresponds to 193 to 217 (NPSRDLGSRFLSLIAYGKDTFTKDN). Residues 218-238 (FYFWVPLVAPCVGSVVFCQFY) traverse the membrane as a helical segment. Residues 239-258 (DKVICPLVDLANNEKDGVDL) lie on the Cytoplasmic side of the membrane.

This sequence belongs to the MIP/aquaporin (TC 1.A.8) family. In terms of assembly, homotetramer.

The protein localises to the cell membrane. The catalysed reaction is H2O(in) = H2O(out). It catalyses the reaction glycerol(in) = glycerol(out). The enzyme catalyses urea(in) = urea(out). It carries out the reaction NH4(+)(in) = NH4(+)(out). The catalysed reaction is methylamine(out) = methylamine(in). It catalyses the reaction formamide(out) = formamide(in). Its function is as follows. Mediates water and glycerol transport across the cell membrane. Permeable to sugar alcohols of up to five carbons and urea. Permeable to ammonia, methylamine and formamide. In Plasmodium falciparum (isolate 3D7), this protein is Aquaglyceroporin.